Here is a 335-residue protein sequence, read N- to C-terminus: NADH-quinone oxidoreductase subunit H (335 aa).

Helical transmembrane passes span 11-31 (VILT…AGAL), 81-101 (VIFT…FAII), 114-134 (IGLL…LFAG), 154-174 (VSYE…VGSF), 187-207 (LWFI…GVAV), 238-258 (FFVG…TLFF), 270-290 (QLSF…FILL), and 307-327 (WKFC…IVLW).

It belongs to the complex I subunit 1 family. NDH-1 is composed of 13 different subunits. Subunits NuoA, H, J, K, L, M, N constitute the membrane sector of the complex.

The protein localises to the cell inner membrane. The enzyme catalyses a quinone + NADH + 5 H(+)(in) = a quinol + NAD(+) + 4 H(+)(out). Functionally, NDH-1 shuttles electrons from NADH, via FMN and iron-sulfur (Fe-S) centers, to quinones in the respiratory chain. The immediate electron acceptor for the enzyme in this species is believed to be ubiquinone. Couples the redox reaction to proton translocation (for every two electrons transferred, four hydrogen ions are translocated across the cytoplasmic membrane), and thus conserves the redox energy in a proton gradient. This subunit may bind ubiquinone. This is NADH-quinone oxidoreductase subunit H from Pseudomonas fluorescens (strain Pf0-1).